A 274-amino-acid polypeptide reads, in one-letter code: 3-methyl-2-oxobutanoate hydroxymethyltransferase (274 aa).

Positions 50 and 89 each coordinate Mg(2+). 3-methyl-2-oxobutanoate-binding positions include D50–S51, D89, and K119. E121 is a binding site for Mg(2+). E188 acts as the Proton acceptor in catalysis.

Belongs to the PanB family. As to quaternary structure, homodecamer; pentamer of dimers. The cofactor is Mg(2+).

The protein localises to the cytoplasm. It carries out the reaction 3-methyl-2-oxobutanoate + (6R)-5,10-methylene-5,6,7,8-tetrahydrofolate + H2O = 2-dehydropantoate + (6S)-5,6,7,8-tetrahydrofolate. The protein operates within cofactor biosynthesis; (R)-pantothenate biosynthesis; (R)-pantoate from 3-methyl-2-oxobutanoate: step 1/2. Catalyzes the reversible reaction in which hydroxymethyl group from 5,10-methylenetetrahydrofolate is transferred onto alpha-ketoisovalerate to form ketopantoate. The polypeptide is 3-methyl-2-oxobutanoate hydroxymethyltransferase (Methylorubrum extorquens (strain PA1) (Methylobacterium extorquens)).